A 1337-amino-acid polypeptide reads, in one-letter code: Rho GTPase-activating protein 29 (1337 aa).

Residues 1–13 show a composition bias toward polar residues; it reads MFRQGSNSGNKRM. 4 disordered regions span residues 1 to 20, 369 to 397, 513 to 551, and 564 to 654; these read MFRQ…ARLS, REEY…LEKK, SSKT…ADEV, and ERRS…TGLS. One can recognise an F-BAR domain in the interval 225-488; it reads EQVDLLLLKN…QAKKYEPGQR (264 aa). The stretch at 326–443 forms a coiled coil; it reads LLARKNDLDK…SEILAQIRKL (118 aa). The segment covering 369-384 has biased composition (basic and acidic residues); it reads REEYEKARSSTSRTEE. Polar residues-rich tracts occupy residues 525-545 and 568-579; these read QNST…SMDN and NSSIDMQVPRTQ. The segment covering 596–613 has biased composition (low complexity); that stretch reads CSDSESAGGSSESRSMDS. Residues 676-723 form a Phorbol-ester/DAG-type zinc finger; sequence AHTHKLRKLRAPSKCRECDSLVVFHGAECEECSLACHKKCLETLAIQC. Residues 737-950 enclose the Rho-GAP domain; sequence IDFAQVVKNS…LLIKHHQMIF (214 aa). Residues 960–973 show a composition bias toward polar residues; it reads TSPTVSQASFGSSI. Disordered regions lie at residues 960-983, 1016-1066, 1083-1114, 1149-1210, and 1273-1337; these read TSPT…LSRH, MKTG…AKPV, SRNT…TNFY, PPSG…KPSD, and TVSR…AHFV. Residues 974–983 show a composition bias toward basic and acidic residues; the sequence is QDKESKLSRH. The segment covering 1083 to 1092 has biased composition (basic and acidic residues); the sequence is SRNTVEHDHS. 2 stretches are compositionally biased toward polar residues: residues 1161–1177 and 1295–1310; these read MASQ…SQSG and VTLS…TEEL. Over residues 1325 to 1337 the composition is skewed to basic and acidic residues; that stretch reads RMQELEHREAHFV.

In terms of biological role, GTPase activator for the Rho-type GTPases by converting them to an inactive GDP-bound state. Has strong activity toward RHOA, and weaker activity toward RAC1 and CDC42. The chain is Rho GTPase-activating protein 29 (arhgap29) from Danio rerio (Zebrafish).